Reading from the N-terminus, the 361-residue chain is Septin-2 (361 aa).

At Y17 the chain carries Phosphotyrosine. Positions 34-306 constitute a Septin-type G domain; it reads KGFEFTLMVV…ENFRSERLKR (273 aa). Positions 44–51 are G1 motif; that stretch reads GESGLGKS. Residues 44 to 51, T78, G104, and 183 to 191 each bind GTP; these read GESGLGKS and KADTLTLKE. The tract at residues 101-104 is G3 motif; that stretch reads DTPG. The tract at residues 182 to 185 is G4 motif; it reads AKAD. N6-acetyllysine is present on K190. Y211 bears the Phosphotyrosine mark. S218 bears the Phosphoserine mark. The GTP site is built by G241 and R256. The tract at residues 260-270 is important for dimerization; it reads WGVVEVENPEH.

It belongs to the TRAFAC class TrmE-Era-EngA-EngB-Septin-like GTPase superfamily. Septin GTPase family. Septins polymerize into heterooligomeric protein complexes that form filaments, and associate with cellular membranes, actin filaments and microtubules. GTPase activity is required for filament formation. Septin filaments are assembled from asymmetrical heterotrimers, composed of SEPTIN2, SEPTIN6 and SEPTIN7 that associate head-to-head to form a hexameric unit. Interaction between SEPTIN2 and SEPTIN7 seems indirect. Also interacts with SEPTIN9 and SEPTIN5. Interaction with SEPTIN4 not detected. Component of a septin core octameric complex consisting of SEPTIN12, SEPTIN7, SEPTIN6 and SEPTIN2 or SEPTIN4 in the order 12-7-6-2-2-6-7-12 or 12-7-6-4-4-6-7-12 and located in the sperm annulus. Interacts with MAP4. Interacts with DZIP1L.

Its subcellular location is the cytoplasm. The protein resides in the cytoskeleton. It localises to the spindle. The protein localises to the cleavage furrow. It is found in the midbody. Its subcellular location is the cell cortex. The protein resides in the cell projection. It localises to the cilium membrane. The protein localises to the cilium. It is found in the flagellum. In terms of biological role, filament-forming cytoskeletal GTPase. Forms a filamentous structure with SEPTIN12, SEPTIN6, SEPTIN2 and probably SEPTIN4 at the sperm annulus which is required for the structural integrity and motility of the sperm tail during postmeiotic differentiation. Required for normal organization of the actin cytoskeleton. Plays a role in the biogenesis of polarized columnar-shaped epithelium by maintaining polyglutamylated microtubules, thus facilitating efficient vesicle transport, and by impeding MAP4 binding to tubulin. Required for the progression through mitosis. Forms a scaffold at the midplane of the mitotic splindle required to maintain CENPE localization at kinetochores and consequently chromosome congression. During anaphase, may be required for chromosome segregation and spindle elongation. Plays a role in ciliogenesis and collective cell movements. In cilia, required for the integrity of the diffusion barrier at the base of the primary cilium that prevents diffusion of transmembrane proteins between the cilia and plasma membranes: probably acts by regulating the assembly of the tectonic-like complex (also named B9 complex) by localizing TMEM231 protein. This Rattus norvegicus (Rat) protein is Septin-2.